Reading from the N-terminus, the 171-residue chain is Small ribosomal subunit protein uS4 (171 aa).

The S4 RNA-binding domain occupies 104 to 168 (RRLQTIVYKK…SPFKERAEEA (65 aa)).

The protein belongs to the universal ribosomal protein uS4 family. As to quaternary structure, part of the 30S ribosomal subunit. Contacts protein S5. The interaction surface between S4 and S5 is involved in control of translational fidelity.

In terms of biological role, one of the primary rRNA binding proteins, it binds directly to 16S rRNA where it nucleates assembly of the body of the 30S subunit. Its function is as follows. With S5 and S12 plays an important role in translational accuracy. The polypeptide is Small ribosomal subunit protein uS4 (Aeropyrum pernix (strain ATCC 700893 / DSM 11879 / JCM 9820 / NBRC 100138 / K1)).